We begin with the raw amino-acid sequence, 320 residues long: ATP-dependent 6-phosphofructokinase (320 aa).

Gly-12 is a binding site for ATP. ADP-binding positions include 22–26 and 55–60; these read RGVVR and RYSVSD. ATP contacts are provided by residues 73-74 and 103-106; these read RF and GDGS. Position 104 (Asp-104) interacts with Mg(2+). 126-128 is a binding site for substrate; that stretch reads TID. Asp-128 acts as the Proton acceptor in catalysis. Arg-155 contributes to the ADP binding site. Residues Arg-163 and 170 to 172 each bind substrate; that span reads MGR. ADP is bound by residues 186-188, Lys-212, and 214-216; these read GCE and KKH. Substrate is bound by residues Glu-223, Arg-244, and 250-253; that span reads HIQR.

Belongs to the phosphofructokinase type A (PFKA) family. ATP-dependent PFK group I subfamily. Prokaryotic clade 'B1' sub-subfamily. Homotetramer. It depends on Mg(2+) as a cofactor.

It localises to the cytoplasm. The enzyme catalyses beta-D-fructose 6-phosphate + ATP = beta-D-fructose 1,6-bisphosphate + ADP + H(+). It functions in the pathway carbohydrate degradation; glycolysis; D-glyceraldehyde 3-phosphate and glycerone phosphate from D-glucose: step 3/4. Its activity is regulated as follows. Allosterically activated by ADP and other diphosphonucleosides, and allosterically inhibited by phosphoenolpyruvate. In terms of biological role, catalyzes the phosphorylation of D-fructose 6-phosphate to fructose 1,6-bisphosphate by ATP, the first committing step of glycolysis. The protein is ATP-dependent 6-phosphofructokinase of Enterobacter cloacae.